A 578-amino-acid polypeptide reads, in one-letter code: 2-succinyl-5-enolpyruvyl-6-hydroxy-3-cyclohexene-1-carboxylate synthase (578 aa).

Belongs to the TPP enzyme family. MenD subfamily. As to quaternary structure, homodimer. Requires Mg(2+) as cofactor. Mn(2+) is required as a cofactor. It depends on thiamine diphosphate as a cofactor.

The enzyme catalyses isochorismate + 2-oxoglutarate + H(+) = 5-enolpyruvoyl-6-hydroxy-2-succinyl-cyclohex-3-ene-1-carboxylate + CO2. Its pathway is quinol/quinone metabolism; 1,4-dihydroxy-2-naphthoate biosynthesis; 1,4-dihydroxy-2-naphthoate from chorismate: step 2/7. It functions in the pathway quinol/quinone metabolism; menaquinone biosynthesis. Catalyzes the thiamine diphosphate-dependent decarboxylation of 2-oxoglutarate and the subsequent addition of the resulting succinic semialdehyde-thiamine pyrophosphate anion to isochorismate to yield 2-succinyl-5-enolpyruvyl-6-hydroxy-3-cyclohexene-1-carboxylate (SEPHCHC). This is 2-succinyl-5-enolpyruvyl-6-hydroxy-3-cyclohexene-1-carboxylate synthase from Prosthecochloris aestuarii (strain DSM 271 / SK 413).